The chain runs to 500 residues: Lariat debranching enzyme (500 aa).

The tract at residues 1-25 (MSSKNPVDEQPCCGSHEGSHQDPAP) is disordered. The a divalent metal cation site is built by Cys48, His50, Asp79, and Asn124. Residues 164–194 (SGIFSQGDFQFSHYERPSFSERDVKSAYHVR) form a lariat recognition loop region. The a divalent metal cation site is built by His222, His274, and His276. The segment at 453 to 500 (DDANAKPNQDDVDFGDEDFVIDRGHTSDEPEAKKSRLDEDKFEAVPSE) is disordered. Positions 462-471 (DDVDFGDEDF) are enriched in acidic residues. Basic and acidic residues predominate over residues 472–500 (VIDRGHTSDEPEAKKSRLDEDKFEAVPSE).

It belongs to the lariat debranching enzyme family. Fe(2+) is required as a cofactor. The cofactor is Zn(2+). Mn(2+) serves as cofactor.

The protein localises to the nucleus. Active in presence of diverse metals including Fe(2+), Zn(2+), Mn(2+). Binds two metal cations in two adjacent alpha and beta metal-binding pockets. Its function is as follows. Cleaves the 2'-5' phosphodiester linkage at the branch point of lariat intron pre-mRNAs after splicing and converts them into linear molecules that are subsequently degraded. It thereby facilitates ribonucleotide turnover. In Caenorhabditis elegans, this protein is Lariat debranching enzyme.